An 87-amino-acid polypeptide reads, in one-letter code: Asparagine--tRNA ligase, cytoplasmic (87 aa).

The protein belongs to the class-II aminoacyl-tRNA synthetase family.

The protein resides in the cytoplasm. The catalysed reaction is tRNA(Asn) + L-asparagine + ATP = L-asparaginyl-tRNA(Asn) + AMP + diphosphate + H(+). This is Asparagine--tRNA ligase, cytoplasmic (DED81) from Saccharomyces paradoxus (Yeast).